The primary structure comprises 784 residues: LPS-assembly protein LptD (784 aa).

Residues 1 to 24 (MKKRIPTLLATMIATALYSQQGLA) form the signal peptide. 2 cysteine pairs are disulfide-bonded: cysteine 31/cysteine 724 and cysteine 173/cysteine 725.

It belongs to the LptD family. As to quaternary structure, component of the lipopolysaccharide transport and assembly complex. Interacts with LptE and LptA. In terms of processing, contains two intramolecular disulfide bonds.

The protein localises to the cell outer membrane. Its function is as follows. Together with LptE, is involved in the assembly of lipopolysaccharide (LPS) at the surface of the outer membrane. This is LPS-assembly protein LptD from Shigella flexneri.